The primary structure comprises 821 residues: Protein EFR3 homolog A (821 aa).

Residues S360, S363, S422, and S694 each carry the phosphoserine modification.

This sequence belongs to the EFR3 family. As to quaternary structure, component of a phosphatidylinositol 4-kinase (PI4K) complex, composed of PI4KA, EFR3 (EFR3A or EFR3B), TTC7 (TTC7A or TTC7B) and HYCC (HYCC1 or HYCC2). Palmitoylated at its N-terminus, anchoring the protein to the plasma membrane.

Its subcellular location is the cell membrane. The protein localises to the cytoplasm. It is found in the cytosol. Functionally, component of a complex required to localize phosphatidylinositol 4-kinase (PI4K) to the plasma membrane. The complex acts as a regulator of phosphatidylinositol 4-phosphate (PtdIns(4)P) synthesis. In the complex, EFR3A probably acts as the membrane-anchoring component. Also involved in responsiveness to G-protein-coupled receptors; it is however unclear whether this role is direct or indirect. This Homo sapiens (Human) protein is Protein EFR3 homolog A.